The chain runs to 141 residues: Hemoglobin subunit alpha-D (141 aa).

One can recognise a Globin domain in the interval 1 to 141 (VLTAEDKKLI…VAAVLAEKYR (141 aa)). Heme b-binding residues include His58 and His87.

This sequence belongs to the globin family. Heterotetramer of two alpha-D chains and two beta chains. In terms of tissue distribution, red blood cells.

Involved in oxygen transport from the lung to the various peripheral tissues. The sequence is that of Hemoglobin subunit alpha-D (HBAD) from Sturnus vulgaris (Starling).